The following is a 415-amino-acid chain: Histidine--tRNA ligase (415 aa).

Belongs to the class-II aminoacyl-tRNA synthetase family. Homodimer.

The protein resides in the cytoplasm. It catalyses the reaction tRNA(His) + L-histidine + ATP = L-histidyl-tRNA(His) + AMP + diphosphate + H(+). The sequence is that of Histidine--tRNA ligase from Rickettsia bellii (strain RML369-C).